The chain runs to 465 residues: Exoenzymes regulatory protein AepA (465 aa).

The signal sequence occupies residues 1-21; sequence MKFNVKMLSVTLGLFTSHAFA.

It belongs to the metallo-dependent hydrolases superfamily.

Involved in the control of extracellular enzymes production. Stimulates PEL, PEH, CEL, and PRT production. This chain is Exoenzymes regulatory protein AepA (aepA), found in Pectobacterium carotovorum subsp. carotovorum (Erwinia carotovora subsp. carotovora).